Reading from the N-terminus, the 140-residue chain is Lymphocyte antigen 6H (140 aa).

A signal peptide spans 1–25 (MLPAAMKGLGLVLLAALLCSSPAHG). The 66-residue stretch at 26–91 (LWCQDCTLTT…RHFFSDYLMG (66 aa)) folds into the UPAR/Ly6 domain. 5 disulfides stabilise this stretch: cysteine 28–cysteine 52, cysteine 31–cysteine 40, cysteine 45–cysteine 73, cysteine 77–cysteine 104, and cysteine 105–cysteine 110. Residue asparagine 36 is glycosylated (N-linked (GlcNAc...) asparagine).

The protein localises to the cell membrane. The sequence is that of Lymphocyte antigen 6H (LY6H) from Bos taurus (Bovine).